The primary structure comprises 277 residues: Pantothenate synthetase (277 aa).

28 to 35 (MGALHSGH) contacts ATP. Residue His35 is the Proton donor of the active site. Gln59 is a binding site for (R)-pantoate. Gln59 serves as a coordination point for beta-alanine. Residues 145–148 (GEKD), Val174, and 182–185 (LSSR) each bind ATP.

This sequence belongs to the pantothenate synthetase family. As to quaternary structure, homodimer.

It localises to the cytoplasm. It carries out the reaction (R)-pantoate + beta-alanine + ATP = (R)-pantothenate + AMP + diphosphate + H(+). It functions in the pathway cofactor biosynthesis; (R)-pantothenate biosynthesis; (R)-pantothenate from (R)-pantoate and beta-alanine: step 1/1. Functionally, catalyzes the condensation of pantoate with beta-alanine in an ATP-dependent reaction via a pantoyl-adenylate intermediate. In Anaplasma marginale (strain St. Maries), this protein is Pantothenate synthetase.